Reading from the N-terminus, the 150-residue chain is Transcriptional repressor NrdR (150 aa).

Residues 3–33 fold into a zinc finger; it reads CPYCTGESAVIDTRELDNGETIRRRRRCKHC. Residues 48–138 enclose the ATP-cone domain; that stretch reads VMVVKKNGDR…VYRSFSDLGK (91 aa).

This sequence belongs to the NrdR family. Zn(2+) serves as cofactor.

Negatively regulates transcription of bacterial ribonucleotide reductase nrd genes and operons by binding to NrdR-boxes. The chain is Transcriptional repressor NrdR from Herpetosiphon aurantiacus (strain ATCC 23779 / DSM 785 / 114-95).